The chain runs to 101 residues: Trp operon repressor homolog (101 aa).

The DNA-binding element occupies Gln-59–Leu-82.

Belongs to the TrpR family. Homodimer.

It is found in the cytoplasm. In terms of biological role, this protein is an aporepressor. When complexed with L-tryptophan it binds the operator region of the trp operon and prevents the initiation of transcription. The sequence is that of Trp operon repressor homolog from Mannheimia succiniciproducens (strain KCTC 0769BP / MBEL55E).